We begin with the raw amino-acid sequence, 322 residues long: Lipoyl synthase (322 aa).

Residues 1-24 (MVTVLDTVSKPRPRHPEKAHRPDQ) form a disordered region. Basic and acidic residues predominate over residues 14–24 (RHPEKAHRPDQ). Positions 59, 64, 70, 85, 89, 92, and 298 each coordinate [4Fe-4S] cluster. Residues 71 to 287 (WDKKHATFMI…ETIAYTKGFL (217 aa)) form the Radical SAM core domain.

It belongs to the radical SAM superfamily. Lipoyl synthase family. [4Fe-4S] cluster is required as a cofactor.

Its subcellular location is the cytoplasm. It carries out the reaction [[Fe-S] cluster scaffold protein carrying a second [4Fe-4S](2+) cluster] + N(6)-octanoyl-L-lysyl-[protein] + 2 oxidized [2Fe-2S]-[ferredoxin] + 2 S-adenosyl-L-methionine + 4 H(+) = [[Fe-S] cluster scaffold protein] + N(6)-[(R)-dihydrolipoyl]-L-lysyl-[protein] + 4 Fe(3+) + 2 hydrogen sulfide + 2 5'-deoxyadenosine + 2 L-methionine + 2 reduced [2Fe-2S]-[ferredoxin]. The protein operates within protein modification; protein lipoylation via endogenous pathway; protein N(6)-(lipoyl)lysine from octanoyl-[acyl-carrier-protein]: step 2/2. Catalyzes the radical-mediated insertion of two sulfur atoms into the C-6 and C-8 positions of the octanoyl moiety bound to the lipoyl domains of lipoate-dependent enzymes, thereby converting the octanoylated domains into lipoylated derivatives. The chain is Lipoyl synthase from Chelativorans sp. (strain BNC1).